The following is a 186-amino-acid chain: Casparian strip membrane protein 3 (186 aa).

Over 1–26 the chain is Cytoplasmic; it reads MTKSTYVELGEEKTSNQKGNMKRGVS. Residues 27–47 traverse the membrane as a helical segment; it reads ILDFILRLIAIVATLASAIAM. Over 48 to 74 the chain is Extracellular; it reads GTTDESLPFFTQFVRFRANYDDLPTLR. A helical membrane pass occupies residues 75-95; the sequence is FFVVASAIVSGYLILSLPLSI. At 96–107 the chain is on the cytoplasmic side; sequence LHIIRSSAGMTR. A helical transmembrane segment spans residues 108-128; it reads VIFIILDTVMLGLLTAGSSAA. Residues 129–161 lie on the Extracellular side of the membrane; sequence ASIVYLAHKGNRKANWFAFCQQYNSFCERISGS. The helical transmembrane segment at 162–182 threads the bilayer; it reads LIGSFIAIPLFIMLILLSALV. The Cytoplasmic segment spans residues 183 to 186; the sequence is LSRR.

This sequence belongs to the Casparian strip membrane proteins (CASP) family. As to quaternary structure, homodimer and heterodimers.

The protein resides in the cell membrane. Regulates membrane-cell wall junctions and localized cell wall deposition. Required for establishment of the Casparian strip membrane domain (CSD) and the subsequent formation of Casparian strips, a cell wall modification of the root endodermis that determines an apoplastic barrier between the intraorganismal apoplasm and the extraorganismal apoplasm and prevents lateral diffusion. The sequence is that of Casparian strip membrane protein 3 from Medicago truncatula (Barrel medic).